The sequence spans 344 residues: MYPLLFRTVLSRMDPEDAHHLASTAIALLPSSGFGWIARRLTAPDPSLAVDALGLRFPSPFGVAAGFDKDAQAVLGLGQLGFGHVEVGTVTAEAQPGNPRPRLFRLIEDRAVINRMGFNNGGAAALADRLRRLRSRRDRPVIGVNIGKTRAVAVDDAVADYVRSARLVAPVADYLAVNVSSPNTPGLRGLQEIELLRPLLTSIRDAADGVPVLVKIAPDLQDAEVERIAELATELGLAGVIATNTTLSRADLRTDAAVVEAAGAGGLSGSPLAPRALEVLRILRRALPAESCVISVGGVETAEDVQARLDAGATLVQGYTAFLYRGPLWARSVNAGLVRIRRTR.

Residues 65 to 69 (AGFDK) and Thr89 contribute to the FMN site. Lys69 contacts substrate. 114-118 (NRMGF) contributes to the substrate binding site. Positions 145 and 178 each coordinate FMN. Substrate is bound at residue Asn178. Ser181 (nucleophile) is an active-site residue. Asn183 contacts substrate. FMN-binding residues include Lys215 and Thr243. 244–245 (NT) serves as a coordination point for substrate. FMN-binding positions include Gly269, Gly298, and 319-320 (YT).

This sequence belongs to the dihydroorotate dehydrogenase family. Type 2 subfamily. In terms of assembly, monomer. It depends on FMN as a cofactor.

The protein localises to the cell membrane. The enzyme catalyses (S)-dihydroorotate + a quinone = orotate + a quinol. It functions in the pathway pyrimidine metabolism; UMP biosynthesis via de novo pathway; orotate from (S)-dihydroorotate (quinone route): step 1/1. In terms of biological role, catalyzes the conversion of dihydroorotate to orotate with quinone as electron acceptor. The sequence is that of Dihydroorotate dehydrogenase (quinone) from Clavibacter michiganensis subsp. michiganensis (strain NCPPB 382).